Consider the following 101-residue polypeptide: ATP-dependent Clp protease adapter protein ClpS 1 (101 aa).

This sequence belongs to the ClpS family. In terms of assembly, binds to the N-terminal domain of the chaperone ClpA.

In terms of biological role, involved in the modulation of the specificity of the ClpAP-mediated ATP-dependent protein degradation. This Bradyrhizobium diazoefficiens (strain JCM 10833 / BCRC 13528 / IAM 13628 / NBRC 14792 / USDA 110) protein is ATP-dependent Clp protease adapter protein ClpS 1.